A 277-amino-acid polypeptide reads, in one-letter code: Protein CUSTOS (277 aa).

Disordered stretches follow at residues 1 to 81 (MVAP…QTTP), 108 to 182 (TQQA…QRCR), and 238 to 277 (SVNG…EPKN). Residues 9 to 18 (SDSESSSSDS) show a composition bias toward low complexity. Ser-62 carries the phosphoserine modification. Residues 63–72 (RRREVNQHDE) show a composition bias toward basic and acidic residues. Thr-80 is modified (phosphothreonine). The stretch at 106–141 (KKTQQARLQQEAKEQQEAKEQQAAKEEQAAKKEEDG) forms a coiled coil. Positions 115-142 (QEAKEQQEAKEQQAAKEEQAAKKEEDGF) are enriched in basic and acidic residues. Residues Ser-158 and Ser-238 each carry the phosphoserine modification. Residues 248 to 258 (TKKKKKKKAKK) show a composition bias toward basic residues. The Nucleolar localization signal (NLS) motif lies at 249-256 (KKKKKKKA). A compositionally biased stretch (low complexity) spans 265-277 (CPPAECAAAEPKN).

It belongs to the CUSTOS family.

It is found in the nucleus envelope. Plays a role in the regulation of Wnt signaling pathway during early development. This Rattus norvegicus (Rat) protein is Protein CUSTOS.